The sequence spans 247 residues: Cell division protein ZapD (247 aa).

Belongs to the ZapD family. As to quaternary structure, interacts with FtsZ.

It localises to the cytoplasm. Functionally, cell division factor that enhances FtsZ-ring assembly. Directly interacts with FtsZ and promotes bundling of FtsZ protofilaments, with a reduction in FtsZ GTPase activity. This chain is Cell division protein ZapD, found in Cronobacter sakazakii (strain ATCC BAA-894) (Enterobacter sakazakii).